The chain runs to 486 residues: Glycogen synthase 2 (486 aa).

Lys15 contacts ADP-alpha-D-glucose.

This sequence belongs to the glycosyltransferase 1 family. Bacterial/plant glycogen synthase subfamily.

The enzyme catalyses [(1-&gt;4)-alpha-D-glucosyl](n) + ADP-alpha-D-glucose = [(1-&gt;4)-alpha-D-glucosyl](n+1) + ADP + H(+). Its pathway is glycan biosynthesis; glycogen biosynthesis. Its function is as follows. Synthesizes alpha-1,4-glucan chains using ADP-glucose. The sequence is that of Glycogen synthase 2 (glgA2) from Rhizobium meliloti (strain 1021) (Ensifer meliloti).